The chain runs to 122 residues: Large ribosomal subunit protein uL14 (122 aa).

Belongs to the universal ribosomal protein uL14 family. As to quaternary structure, part of the 50S ribosomal subunit. Forms a cluster with proteins L3 and L19. In the 70S ribosome, L14 and L19 interact and together make contacts with the 16S rRNA in bridges B5 and B8.

In terms of biological role, binds to 23S rRNA. Forms part of two intersubunit bridges in the 70S ribosome. This is Large ribosomal subunit protein uL14 from Halothermothrix orenii (strain H 168 / OCM 544 / DSM 9562).